The following is a 148-amino-acid chain: Single-stranded DNA-binding protein 1-B, mitochondrial (148 aa).

Residues 1–17 (MFHRPVLQVFRQFARCQ) constitute a mitochondrion transit peptide. Residues 30–142 (MNKVQLLGRV…IIADNIIFLT (113 aa)) enclose the SSB domain.

As to quaternary structure, homotetramer.

It localises to the mitochondrion. The protein resides in the mitochondrion matrix. The protein localises to the mitochondrion nucleoid. In terms of biological role, binds preferentially and cooperatively to pyrimidine rich single-stranded DNA (ss-DNA). Required to maintain the copy number of mitochondrial DNA (mtDNA) and plays crucial roles during mtDNA replication that stimulate activity of the DNA polymerase at the replication fork. May also function in mtDNA repair. In Xenopus laevis (African clawed frog), this protein is Single-stranded DNA-binding protein 1-B, mitochondrial (ssbp1-b).